We begin with the raw amino-acid sequence, 202 residues long: MMIVVMLILSYLIGAIPNGYVIGKLFFKKDIRQYGSGNTGATNSFRVLGKPAGFIVTFLDIFKGFITVFFPIWFPVHADGPLSTFFTHGLIVGLFAILGHVYPIYLRFKGGKAVATSAGVVLGVNPILLLILAIIFFGVLYIFKYVSLSSIIAAICCVIGSLIIQDYILFGMSLLVSIILIVRHRTNIVRIFKGEEPKIKWM.

A run of 6 helical transmembrane segments spans residues 2–22 (MIVV…GYVI), 54–74 (FIVT…PIWF), 85–105 (FFTH…YPIY), 120–140 (VVLG…FGVL), 141–161 (YIFK…VIGS), and 162–182 (LIIQ…ILIV).

This sequence belongs to the PlsY family. In terms of assembly, probably interacts with PlsX.

It localises to the cell membrane. The enzyme catalyses an acyl phosphate + sn-glycerol 3-phosphate = a 1-acyl-sn-glycero-3-phosphate + phosphate. It functions in the pathway lipid metabolism; phospholipid metabolism. Catalyzes the transfer of an acyl group from acyl-phosphate (acyl-PO(4)) to glycerol-3-phosphate (G3P) to form lysophosphatidic acid (LPA). This enzyme utilizes acyl-phosphate as fatty acyl donor, but not acyl-CoA or acyl-ACP. In Staphylococcus haemolyticus (strain JCSC1435), this protein is Glycerol-3-phosphate acyltransferase.